We begin with the raw amino-acid sequence, 469 residues long: Ribulose bisphosphate carboxylase large chain (469 aa).

Lys-5 carries the N6,N6,N6-trimethyllysine modification. 2 residues coordinate substrate: Asn-114 and Thr-164. The active-site Proton acceptor is the Lys-166. Substrate is bound at residue Lys-168. Mg(2+) is bound by residues Lys-192, Asp-194, and Glu-195. Lys-192 carries the post-translational modification N6-carboxylysine. The active-site Proton acceptor is the His-285. Positions 286, 318, and 370 each coordinate substrate.

This sequence belongs to the RuBisCO large chain family. Type I subfamily. Heterohexadecamer of 8 large chains and 8 small chains; disulfide-linked. The disulfide link is formed within the large subunit homodimers. Requires Mg(2+) as cofactor. The disulfide bond which can form in the large chain dimeric partners within the hexadecamer appears to be associated with oxidative stress and protein turnover.

It localises to the plastid. Its subcellular location is the chloroplast. It carries out the reaction 2 (2R)-3-phosphoglycerate + 2 H(+) = D-ribulose 1,5-bisphosphate + CO2 + H2O. It catalyses the reaction D-ribulose 1,5-bisphosphate + O2 = 2-phosphoglycolate + (2R)-3-phosphoglycerate + 2 H(+). Its function is as follows. RuBisCO catalyzes two reactions: the carboxylation of D-ribulose 1,5-bisphosphate, the primary event in carbon dioxide fixation, as well as the oxidative fragmentation of the pentose substrate in the photorespiration process. Both reactions occur simultaneously and in competition at the same active site. In Cephalanthus occidentalis (Common buttonbush), this protein is Ribulose bisphosphate carboxylase large chain.